The primary structure comprises 303 residues: Ribonucleoside-diphosphate reductase small subunit (303 aa).

Residues Asp60, Glu90, and His93 each contribute to the Fe cation site. Tyr97 is a catalytic residue. Residues 147 to 167 (LLMILIEGIFFASSFASISYL) traverse the membrane as a helical segment. Positions 153, 187, and 190 each coordinate Fe cation.

It belongs to the ribonucleoside diphosphate reductase small chain family. Heterotetramer composed of a homodimer of the large subunit (R1) and a homodimer of the small subunit (R2). Larger multisubunit protein complex are also active, composed of (R1)n(R2)n. Fe cation is required as a cofactor.

Its subcellular location is the host membrane. It carries out the reaction a 2'-deoxyribonucleoside 5'-diphosphate + [thioredoxin]-disulfide + H2O = a ribonucleoside 5'-diphosphate + [thioredoxin]-dithiol. Its function is as follows. Ribonucleoside-diphosphate reductase holoenzyme provides the precursors necessary for viral DNA synthesis. Allows virus growth in non-dividing cells, as well as reactivation from latency in infected hosts. Catalyzes the biosynthesis of deoxyribonucleotides from the corresponding ribonucleotides. This is Ribonucleoside-diphosphate reductase small subunit from Suid herpesvirus 1 (strain Kaplan) (SuHV-1).